The primary structure comprises 442 residues: MQLNNRDLKSIIDNEALAYAMYTVENRAIPNMIDGFKPVQRFVIARALDLARGNKDKFHKLASIAGGVADLGYHHGENSAQDAGALMANTWNNNFPLLDGQGNFGSRTVQKAAASRYIFARVSKNFYNVYKDTEYAPVHQDKEHIPPAFYLPIIPTVLLNGVSGIATGYATYILPHSVSSVKKAVLQALQGKKVTKPKVEFPEFRGEVVEIDGQYEIRGTYKFTSRTQMHITEIPYKYDRETYVSKILDPLENKGFITWDDACGEHGFGFKVKFRKEYSLSDNEEERHAKIMKDFGLIERRSQNITVINEKGKLQVYDNVVDLIKDFVEVRKTYVQKRIDNKIKETESAFRLAFAKAHFIKKVISGEIVVQGKTRKELTEELSKIDMYSSYVDKLVGMNIFHMTSDEAKKLAEEAKAKKEENEYWKTTDVVTEYTKDLEEIK.

A Topo IIA-type catalytic domain is found at 29 to 438 (IPNMIDGFKP…DVVTEYTKDL (410 aa)). Residue tyrosine 117 is the O-(5'-phospho-DNA)-tyrosine intermediate of the active site.

The protein belongs to the type II topoisomerase family. As to quaternary structure, part of the DNA topoisomerase complex made of gp39, gp52 and gp60. The cofactor is Mg(2+).

It catalyses the reaction ATP-dependent breakage, passage and rejoining of double-stranded DNA.. Its function is as follows. Medium subunit of the DNA topoisomerase that untwists superhelical DNA. Controls topological states of double-stranded DNA by transient breakage and subsequent rejoining of DNA strands. The protein is DNA topoisomerase medium subunit (52) of Enterobacteria phage T4 (Bacteriophage T4).